A 681-amino-acid chain; its full sequence is DNA ligase (681 aa).

NAD(+) contacts are provided by residues 35–39 (DAEYD), 84–85 (SI), and Glu-121. The active-site N6-AMP-lysine intermediate is Lys-123. Arg-144, Glu-180, Lys-300, and Lys-324 together coordinate NAD(+). Zn(2+)-binding residues include Cys-418, Cys-421, Cys-436, and Cys-442. Residues 601-681 (AADGPASGKT…GLRRLLEQPA (81 aa)) form the BRCT domain.

This sequence belongs to the NAD-dependent DNA ligase family. LigA subfamily. Mg(2+) is required as a cofactor. It depends on Mn(2+) as a cofactor.

The catalysed reaction is NAD(+) + (deoxyribonucleotide)n-3'-hydroxyl + 5'-phospho-(deoxyribonucleotide)m = (deoxyribonucleotide)n+m + AMP + beta-nicotinamide D-nucleotide.. In terms of biological role, DNA ligase that catalyzes the formation of phosphodiester linkages between 5'-phosphoryl and 3'-hydroxyl groups in double-stranded DNA using NAD as a coenzyme and as the energy source for the reaction. It is essential for DNA replication and repair of damaged DNA. In Aromatoleum aromaticum (strain DSM 19018 / LMG 30748 / EbN1) (Azoarcus sp. (strain EbN1)), this protein is DNA ligase.